A 236-amino-acid polypeptide reads, in one-letter code: Lipoarabinomannan carrier protein LprG (236 aa).

The first 25 residues, Met1–Gly25, serve as a signal peptide directing secretion. Cys26 carries the N-palmitoyl cysteine lipid modification. Residue Cys26 is the site of S-diacylglycerol cysteine attachment.

It belongs to the LppX/LprAFG lipoprotein family. In terms of assembly, interacts with itself, Ag85A (MSMEG_6398), LppI (MSMEG_3851) and LppK (MSMEG_3904) in vivo.

It localises to the cell inner membrane. Its subcellular location is the secreted. The protein resides in the cell wall. Helps membrane protein MSMEG_3069/MSMEI_2992 (P55) transport triacylglycerides (TAG) across the inner cell membrane into the periplasm and probably ultimately to the outer membrane. Binds TAG in its hydrophobic cavity and transfers it between lipid bilayers. TAG probably regulates lipid metabolism and growth regulation and plays a structural role in the outer membrane. Also binds mannosides, lipoarabinomannan and lipomannan and various glycolipids in the same cavity. Required for MSMEG_3069/MSMEI_2992 export activity. Export of ethidium bromide by MSMEG_3069/MSMEI_2992 can be complemented by the equivalent operon from M.tuberculosis (lprG-Rv1410c). Involved in mycolylation. This is Lipoarabinomannan carrier protein LprG from Mycolicibacterium smegmatis (strain ATCC 700084 / mc(2)155) (Mycobacterium smegmatis).